The following is a 201-amino-acid chain: uncharacterized protein (201 aa).

This is an uncharacterized protein from Haemophilus influenzae (strain ATCC 51907 / DSM 11121 / KW20 / Rd).